A 396-amino-acid polypeptide reads, in one-letter code: Cytochrome c biogenesis protein Ccs1 (396 aa).

3 helical membrane-spanning segments follow: residues Leu-22–Ile-42, Ser-79–Lys-99, and Ala-162–Ala-182.

The protein belongs to the Ccs1/CcsB family. May interact with CcsA.

Its subcellular location is the plastid. The protein resides in the chloroplast thylakoid membrane. Its function is as follows. Required during biogenesis of c-type cytochromes (cytochrome c6 and cytochrome f) at the step of heme attachment. The protein is Cytochrome c biogenesis protein Ccs1 of Cyanidium caldarium (Red alga).